The chain runs to 422 residues: Tyrosine--tRNA ligase (422 aa).

Y35 contributes to the L-tyrosine binding site. Residues 40-49 (PTAASLHVGH) carry the 'HIGH' region motif. Residues Y169 and Q173 each contribute to the L-tyrosine site. Positions 229-233 (KFGKT) match the 'KMSKS' region motif. K232 contributes to the ATP binding site. The 67-residue stretch at 352–418 (VRLAQLFADT…GKKSLASVAV (67 aa)) folds into the S4 RNA-binding domain.

The protein belongs to the class-I aminoacyl-tRNA synthetase family. TyrS type 1 subfamily. Homodimer.

It localises to the cytoplasm. It catalyses the reaction tRNA(Tyr) + L-tyrosine + ATP = L-tyrosyl-tRNA(Tyr) + AMP + diphosphate + H(+). In terms of biological role, catalyzes the attachment of tyrosine to tRNA(Tyr) in a two-step reaction: tyrosine is first activated by ATP to form Tyr-AMP and then transferred to the acceptor end of tRNA(Tyr). The polypeptide is Tyrosine--tRNA ligase (Kineococcus radiotolerans (strain ATCC BAA-149 / DSM 14245 / SRS30216)).